The primary structure comprises 1370 residues: Insulin-like growth factor 1 receptor (1370 aa).

The N-terminal stretch at 1 to 30 (MKSGSGGGSPTSLWGLVFLSAALSLWPTSG) is a signal peptide. Cysteines 33 and 52 form a disulfide. N-linked (GlcNAc...) asparagine glycosylation is found at Asn51, Asn102, and Asn135. 13 disulfide bridges follow: Cys150–Cys178, Cys182–Cys205, Cys192–Cys211, Cys215–Cys224, Cys219–Cys230, Cys231–Cys239, Cys235–Cys248, Cys251–Cys260, Cys264–Cys276, Cys282–Cys303, Cys307–Cys321, Cys324–Cys328, and Cys332–Cys354. N-linked (GlcNAc...) asparagine glycosylation occurs at Asn245. Asn314 carries N-linked (GlcNAc...) asparagine glycosylation. N-linked (GlcNAc...) asparagine glycosylation is found at Asn418 and Asn439. Cys456 and Cys489 are joined by a disulfide. Fibronectin type-III domains lie at 490–610 (ESDV…TNAS) and 611–709 (VPSI…TEAE). Asn535, Asn608, Asn623, Asn641, Asn748, Asn757, Asn765, Asn901, and Asn914 each carry an N-linked (GlcNAc...) asparagine glycan. The Extracellular portion of the chain corresponds to 742 to 936 (DVLQVANTTM…AKTTYENFMH (195 aa)). A Fibronectin type-III 3 domain is found at 835–928 (IPGPVTWEPR…DPVFFYVPAK (94 aa)). A helical membrane pass occupies residues 937–960 (LIIALPVAILLIVGGLVIMLYVFH). Residues 961–1370 (RKRNNSRLGN…ALPLPQSSTC (410 aa)) are Cytoplasmic-facing. Residues 978 to 981 (NPEY) carry the IRS1- and SHC1-binding motif. Tyr981 carries the phosphotyrosine modification. In terms of domain architecture, Protein kinase spans 1000–1275 (ITMNRELGQG…SIKDEMEPSF (276 aa)). Residues 1006–1014 (LGQGSFGMV) and Lys1034 contribute to the ATP site. Asp1136 functions as the Proton acceptor in the catalytic mechanism. Phosphotyrosine; by autocatalysis occurs at positions 1162, 1166, and 1167. Glycyl lysine isopeptide (Lys-Gly) (interchain with G-Cter in ubiquitin) cross-links involve residues Lys1169 and Lys1172. Ser1279 carries the phosphoserine; by GSK3-beta modification. Ser1283 carries the post-translational modification Phosphoserine. The interval 1304-1370 (NMESVPLDPS…ALPLPQSSTC (67 aa)) is disordered. Positions 1305 to 1321 (MESVPLDPSASSASLPL) are enriched in low complexity. Residues 1322 to 1331 (PERHSGHKAE) are compositionally biased toward basic and acidic residues.

Belongs to the protein kinase superfamily. Tyr protein kinase family. Insulin receptor subfamily. As to quaternary structure, tetramer of 2 alpha and 2 beta chains linked by disulfide bonds. The alpha chains contribute to the formation of the ligand-binding domain, while the beta chain carries the kinase domain. Interacts with PIK3R1 and with the PTB/PID domains of IRS1 and SHC1 in vitro when autophosphorylated on tyrosine residues. Forms a hybrid receptor with INSR, the hybrid is a tetramer consisting of 1 alpha chain and 1 beta chain of INSR and 1 alpha chain and 1 beta chain of IGF1R. Interacts with ARRB1 and ARRB2. Interacts with GRB10. Interacts with RACK1. Interacts with SOCS1, SOCS2 and SOCS3. Interacts with 14-3-3 proteins. Interacts with NMD2. Interacts with MAP3K5. Interacts with STAT3. Found in a ternary complex with IGF1 and ITGAV:ITGB3 or ITGA6:ITGB4. Interacts (nascent precursor form) with ZFAND2B. Autophosphorylated on tyrosine residues in response to ligand binding. Autophosphorylation occurs in trans, i.e. one subunit of the dimeric receptor phosphorylates tyrosine residues on the other subunit. Autophosphorylation occurs in a sequential manner; Tyr-1166 is predominantly phosphorylated first, followed by phosphorylation of Tyr-1162 and Tyr-1167. While every single phosphorylation increases kinase activity, all three tyrosine residues in the kinase activation loop (Tyr-1162, Tyr-1166 and Tyr-1167) have to be phosphorylated for optimal activity. Can be autophosphorylated at additional tyrosine residues (in vitro). Autophosphorylated is followed by phosphorylation of juxtamembrane tyrosines and C-terminal serines. May also be phosphorylated at Tyr-1162 and Tyr-1167 by mTORC2. Phosphorylation of Tyr-981 is required for IRS1- and SHC1-binding. Phosphorylation of Ser-1279 by GSK-3beta restrains kinase activity and promotes cell surface expression, it requires a priming phosphorylation at Ser-1283. Dephosphorylated by PTPN1. In terms of processing, polyubiquitinated at Lys-1169 and Lys-1172 through both 'Lys-48' and 'Lys-29' linkages, promoting receptor endocytosis and subsequent degradation by the proteasome. Ubiquitination is facilitated by pre-existing phosphorylation. Post-translationally, sumoylated with SUMO1. Controlled by regulated intramembrane proteolysis (RIP). Undergoes metalloprotease-dependent constitutive ectodomain shedding to produce a membrane-anchored 52 kDa C-Terminal fragment which is further processed by presenilin gamma-secretase to yield an intracellular 50 kDa fragment.

The protein localises to the cell membrane. The enzyme catalyses L-tyrosyl-[protein] + ATP = O-phospho-L-tyrosyl-[protein] + ADP + H(+). With respect to regulation, activated by autophosphorylation at Tyr-1162, Tyr-1166 and Tyr-1167 on the kinase activation loop; phosphorylation at all three tyrosine residues is required for optimal kinase activity. Inhibited by MSC1609119A-1, BMS-754807, PQIP, benzimidazole pyridinone, isoquinolinedione, bis-azaindole, 3-cyanoquinoline, 2,4-bis-arylamino-1,3-pyrimidine, pyrrolopyrimidine, pyrrole-5-carboxaldehyde, picropodophyllin (PPP), tyrphostin derivatives. While most inhibitors bind to the ATP binding pocket, MSC1609119A-1 functions as allosteric inhibitor and binds close to the DFG motif and the activation loop. Dephosphorylated by PTPN1. In terms of biological role, receptor tyrosine kinase which mediates actions of insulin-like growth factor 1 (IGF1). Binds IGF1 with high affinity and IGF2 and insulin (INS) with a lower affinity. The activated IGF1R is involved in cell growth and survival control. IGF1R is crucial for tumor transformation and survival of malignant cell. Ligand binding activates the receptor kinase, leading to receptor autophosphorylation, and tyrosines phosphorylation of multiple substrates, that function as signaling adapter proteins including, the insulin-receptor substrates (IRS1/2), Shc and 14-3-3 proteins. Phosphorylation of IRSs proteins lead to the activation of two main signaling pathways: the PI3K-AKT/PKB pathway and the Ras-MAPK pathway. The result of activating the MAPK pathway is increased cellular proliferation, whereas activating the PI3K pathway inhibits apoptosis and stimulates protein synthesis. Phosphorylated IRS1 can activate the 85 kDa regulatory subunit of PI3K (PIK3R1), leading to activation of several downstream substrates, including protein AKT/PKB. AKT phosphorylation, in turn, enhances protein synthesis through mTOR activation and triggers the antiapoptotic effects of IGFIR through phosphorylation and inactivation of BAD. In parallel to PI3K-driven signaling, recruitment of Grb2/SOS by phosphorylated IRS1 or Shc leads to recruitment of Ras and activation of the ras-MAPK pathway. In addition to these two main signaling pathways IGF1R signals also through the Janus kinase/signal transducer and activator of transcription pathway (JAK/STAT). Phosphorylation of JAK proteins can lead to phosphorylation/activation of signal transducers and activators of transcription (STAT) proteins. In particular activation of STAT3, may be essential for the transforming activity of IGF1R. The JAK/STAT pathway activates gene transcription and may be responsible for the transforming activity. JNK kinases can also be activated by the IGF1R. IGF1 exerts inhibiting activities on JNK activation via phosphorylation and inhibition of MAP3K5/ASK1, which is able to directly associate with the IGF1R. When present in a hybrid receptor with INSR, binds IGF1. The protein is Insulin-like growth factor 1 receptor (Igf1r) of Rattus norvegicus (Rat).